The chain runs to 186 residues: Ribosome-recycling factor (186 aa).

Residues 135–164 form a disordered region; it reads DGMDDLKKAEKDGEIGQDESRAQSERVQKM.

It belongs to the RRF family.

Its subcellular location is the cytoplasm. Functionally, responsible for the release of ribosomes from messenger RNA at the termination of protein biosynthesis. May increase the efficiency of translation by recycling ribosomes from one round of translation to another. This Sinorhizobium medicae (strain WSM419) (Ensifer medicae) protein is Ribosome-recycling factor.